Consider the following 144-residue polypeptide: Transcription antitermination protein NusB (144 aa).

Belongs to the NusB family.

In terms of biological role, involved in transcription antitermination. Required for transcription of ribosomal RNA (rRNA) genes. Binds specifically to the boxA antiterminator sequence of the ribosomal RNA (rrn) operons. In Pelotomaculum thermopropionicum (strain DSM 13744 / JCM 10971 / SI), this protein is Transcription antitermination protein NusB.